Here is a 128-residue protein sequence, read N- to C-terminus: UPF0102 protein GSU0650 (128 aa).

Belongs to the UPF0102 family.

The sequence is that of UPF0102 protein GSU0650 from Geobacter sulfurreducens (strain ATCC 51573 / DSM 12127 / PCA).